Reading from the N-terminus, the 359-residue chain is Phosphoserine aminotransferase (359 aa).

Residue Arg-42 coordinates L-glutamate. Pyridoxal 5'-phosphate is bound by residues 76-77 (AS), Trp-102, Thr-152, Asp-171, and Gln-194. Lys-195 carries the post-translational modification N6-(pyridoxal phosphate)lysine. Residue 236–237 (NT) coordinates pyridoxal 5'-phosphate.

The protein belongs to the class-V pyridoxal-phosphate-dependent aminotransferase family. SerC subfamily. As to quaternary structure, homodimer. The cofactor is pyridoxal 5'-phosphate.

It is found in the cytoplasm. It catalyses the reaction O-phospho-L-serine + 2-oxoglutarate = 3-phosphooxypyruvate + L-glutamate. The enzyme catalyses 4-(phosphooxy)-L-threonine + 2-oxoglutarate = (R)-3-hydroxy-2-oxo-4-phosphooxybutanoate + L-glutamate. It participates in amino-acid biosynthesis; L-serine biosynthesis; L-serine from 3-phospho-D-glycerate: step 2/3. Its pathway is cofactor biosynthesis; pyridoxine 5'-phosphate biosynthesis; pyridoxine 5'-phosphate from D-erythrose 4-phosphate: step 3/5. In terms of biological role, catalyzes the reversible conversion of 3-phosphohydroxypyruvate to phosphoserine and of 3-hydroxy-2-oxo-4-phosphonooxybutanoate to phosphohydroxythreonine. This Ruthia magnifica subsp. Calyptogena magnifica protein is Phosphoserine aminotransferase.